The chain runs to 216 residues: MELPRKYDRVTGRILTHKNNQMCTTECSQMYNLHNPITFELGLGNVFVCMRCLTVHHCDMQTDCTIVNTHEGYVCAKTGLFYSGWMPAYADCFLEPICEPNIETVNVVVVLLSYVYSFLMENKERYAAIIDSIIKDGKFIKNVEDAVFYTFNAVFTNSTFNKIPLTTISRLFVQLIIGGHAKGTIYDSNVIRVSRRKREDSLLKKMRLEYGNALIL.

Belongs to the herpesviridae UL92 family.

The polypeptide is Protein U63 (U63) (Homo sapiens (Human)).